The chain runs to 1107 residues: Membrane-associated guanylate kinase, WW and PDZ domain-containing protein 3 (1107 aa).

A PDZ 1 domain is found at 17-102 (ECGLSGVGGD…PIRLKTVKPG (86 aa)). Residues 110–284 (RHYLSLQFQK…SMDFRNYLTR (175 aa)) form the Guanylate kinase-like domain. Position 117 to 124 (117 to 124 (FQKGSIDH)) interacts with ATP. Residues 210–277 (FDTETQRKRT…SYNQTNSSMD (68 aa)) form a disordered region. Residues 220–231 (TSVSKMQRTDSS) are compositionally biased toward polar residues. Residues 232–241 (LPEEEDEEER) show a composition bias toward acidic residues. Basic and acidic residues predominate over residues 251–261 (TDHRDRQEPSE). Residues 267 to 277 (PSYNQTNSSMD) show a composition bias toward polar residues. WW domains follow at residues 289 to 322 (EPLP…DPRL) and 335 to 368 (GELP…NPVL). The interval 374 to 398 (KQLNPAPSEGTVHQEPENSQFTRDP) is disordered. PDZ domains follow at residues 407-489 (HTSL…TLCR), 577-653 (TIPL…LILR), 727-809 (DVFL…TVRR), and 853-940 (DVIL…IAEE). A disordered region spans residues 941–975 (EHRGPPSGSNSARQSPAPQHRPMGQTQPTYGTLDR). Residues 947-957 (SGSNSARQSPA) show a composition bias toward polar residues. Positions 1003–1085 (PVELERGPRG…KVLLLLRPGT (83 aa)) constitute a PDZ 6 domain.

This sequence belongs to the MAGUK family.

The protein localises to the cell membrane. It localises to the cell junction. It is found in the tight junction. Acts as a scaffolding protein at cell-cell junctions, thereby regulating various cellular and signaling processes. This chain is Membrane-associated guanylate kinase, WW and PDZ domain-containing protein 3 (magi3), found in Xenopus tropicalis (Western clawed frog).